A 150-amino-acid polypeptide reads, in one-letter code: Ribonuclease H (150 aa).

An RNase H type-1 domain is found at 1–146 (MPELFAYTDG…ADELARAGMA (146 aa)). Residues Asp-9, Glu-52, Asp-74, and Asp-138 each coordinate Mg(2+).

This sequence belongs to the RNase H family. As to quaternary structure, monomer. Mg(2+) serves as cofactor.

It localises to the cytoplasm. The enzyme catalyses Endonucleolytic cleavage to 5'-phosphomonoester.. In terms of biological role, endonuclease that specifically degrades the RNA of RNA-DNA hybrids. This is Ribonuclease H from Roseobacter denitrificans (strain ATCC 33942 / OCh 114) (Erythrobacter sp. (strain OCh 114)).